The primary structure comprises 231 residues: Non-fluorescent flavoprotein (231 aa).

It belongs to the bacterial luciferase oxidoreductase family. Homodimer. It depends on FMN as a cofactor.

The polypeptide is Non-fluorescent flavoprotein (luxF) (Photobacterium phosphoreum).